The chain runs to 153 residues: uncharacterized protein (153 aa).

An N-terminal signal peptide occupies residues 1-18 (MSARISKQLRLSVPPCLA). Asparagine 19 and asparagine 25 each carry an N-linked (GlcNAc...) asparagine glycan. Residues 19 to 43 (NRTTASNSSSCVTEVEPLLQSFSST) are Extracellular-facing. A helical membrane pass occupies residues 44–64 (LVLIVLATVIFCLVVLSLSTF). Topologically, residues 65-153 (HMHKSKMKKR…EHLQQSVVLS (89 aa)) are cytoplasmic. The interval 75 to 115 (KIEKAQEEYERDHCSPKAERGHLHGMGRGGTHGSPTSPTIQ) is disordered. The span at 77–96 (EKAQEEYERDHCSPKAERGH) shows a compositional bias: basic and acidic residues.

Its subcellular location is the membrane. This is an uncharacterized protein from Xenopus tropicalis (Western clawed frog).